The chain runs to 417 residues: D-amino acid dehydrogenase (417 aa).

FAD is bound at residue 3–17 (VIVIGSGVIGLTSAW).

This sequence belongs to the DadA oxidoreductase family. It depends on FAD as a cofactor.

It carries out the reaction a D-alpha-amino acid + A + H2O = a 2-oxocarboxylate + AH2 + NH4(+). The protein operates within amino-acid degradation; D-alanine degradation; NH(3) and pyruvate from D-alanine: step 1/1. In terms of biological role, oxidative deamination of D-amino acids. This is D-amino acid dehydrogenase from Vibrio atlanticus (strain LGP32) (Vibrio splendidus (strain Mel32)).